Consider the following 254-residue polypeptide: D-aminoacyl-tRNA deacylase (254 aa).

The protein belongs to the DtdA deacylase family. In terms of assembly, monomer. It depends on Zn(2+) as a cofactor.

The catalysed reaction is a D-aminoacyl-tRNA + H2O = a tRNA + a D-alpha-amino acid + H(+). The enzyme catalyses glycyl-tRNA(Ala) + H2O = tRNA(Ala) + glycine + H(+). D-aminoacyl-tRNA deacylase with broad substrate specificity. By recycling D-aminoacyl-tRNA to D-amino acids and free tRNA molecules, this enzyme counteracts the toxicity associated with the formation of D-aminoacyl-tRNA entities in vivo. The chain is D-aminoacyl-tRNA deacylase from Methanococcus vannielii (strain ATCC 35089 / DSM 1224 / JCM 13029 / OCM 148 / SB).